We begin with the raw amino-acid sequence, 176 residues long: RNA 2',3'-cyclic phosphodiesterase (176 aa).

Residue His-43 is the Proton donor of the active site. 2 consecutive short sequence motifs (HXTX) follow at residues 43–46 (HLTL) and 125–128 (HITL). The active-site Proton acceptor is His-125.

Belongs to the 2H phosphoesterase superfamily. ThpR family. In terms of assembly, monomer.

It carries out the reaction a 3'-end 2',3'-cyclophospho-ribonucleotide-RNA + H2O = a 3'-end 2'-phospho-ribonucleotide-RNA + H(+). In terms of biological role, hydrolyzes RNA 2',3'-cyclic phosphodiester to an RNA 2'-phosphomonoester. In vitro, can also ligate 5' and 3' half-tRNA molecules with 2',3'-cyclic phosphate and 5'-hydroxyl termini, respectively, to the product containing the 2'-5' phosphodiester linkage. This reaction does not require ATP and is reversible. The protein is RNA 2',3'-cyclic phosphodiesterase of Escherichia coli (strain K12).